Consider the following 49-residue polypeptide: Delta-actitoxin-Axm1h (49 aa).

3 disulfides stabilise this stretch: Cys4/Cys46, Cys6/Cys36, and Cys29/Cys47.

It belongs to the sea anemone sodium channel inhibitory toxin family. Type I subfamily.

The protein localises to the secreted. It is found in the nematocyst. Binds specifically to voltage-gated sodium channels (Nav) (site 3), thereby delaying their inactivation during signal transduction. Thus it may strongly stimulate mammalian cardiac muscle contraction. The sequence is that of Delta-actitoxin-Axm1h from Anthopleura xanthogrammica (Giant green sea anemone).